A 132-amino-acid polypeptide reads, in one-letter code: Small ribosomal subunit protein uS8c (132 aa).

Belongs to the universal ribosomal protein uS8 family. As to quaternary structure, part of the 30S ribosomal subunit.

It localises to the plastid. The protein localises to the chloroplast. Its function is as follows. One of the primary rRNA binding proteins, it binds directly to 16S rRNA central domain where it helps coordinate assembly of the platform of the 30S subunit. This chain is Small ribosomal subunit protein uS8c (rps8), found in Buxus microphylla (Littleleaf boxwood).